Here is a 2273-residue protein sequence, read N- to C-terminus: Acetyl-CoA carboxylase, mitochondrial (2273 aa).

The transit peptide at 1–104 directs the protein to the mitochondrion; it reads KGKTITHGQS…RGNIHKHTRL (104 aa). In terms of domain architecture, Biotin carboxylation spans 134 to 635; it reads VISKILIANN…STGWLDDLIL (502 aa). The region spanning 292–484 is the ATP-grasp domain; sequence KTNFVSVPDD…LPATQLQIAM (193 aa). 332 to 337 serves as a coordination point for ATP; sequence GGGGKG. Residue Arg459 is part of the active site. Positions 763–837 constitute a Biotinyl-binding domain; sequence LEAELNPTQV…EAGDVIAKLT (75 aa). The residue at position 804 (Lys804) is an N6-biotinyllysine. Positions 1532–1867 constitute a CoA carboxyltransferase N-terminal domain; it reads PYSVKDWLQP…KRDMSPPLLE (336 aa). The carboxyltransferase stretch occupies residues 1532–2187; the sequence is PYSVKDWLQP…EGQVIKRLQK (656 aa). Residues Arg1776, Lys2080, and Arg2082 each coordinate CoA. The CoA carboxyltransferase C-terminal domain occupies 1871-2187; the sequence is RWDRDVDFKP…EGQVIKRLQK (317 aa).

It depends on biotin as a cofactor.

It is found in the mitochondrion. It carries out the reaction hydrogencarbonate + acetyl-CoA + ATP = malonyl-CoA + ADP + phosphate + H(+). It catalyses the reaction N(6)-biotinyl-L-lysyl-[protein] + hydrogencarbonate + ATP = N(6)-carboxybiotinyl-L-lysyl-[protein] + ADP + phosphate + H(+). Its pathway is lipid metabolism; malonyl-CoA biosynthesis; malonyl-CoA from acetyl-CoA: step 1/1. In terms of biological role, catalyzes the rate-limiting reaction in the mitochondrial fatty acid synthesis (FAS) type II pathway. Responsible for the production of the mitochondrial malonyl-CoA, used for the biosynthesis of the cofactor lipoic acid. This protein carries three functions: biotin carboxyl carrier protein, biotin carboxylase, and carboxyltransferase. In Saccharomyces cerevisiae (strain YJM789) (Baker's yeast), this protein is Acetyl-CoA carboxylase, mitochondrial (HFA1).